The sequence spans 164 residues: Phosphopantetheine adenylyltransferase (164 aa).

A substrate-binding site is contributed by serine 10. Residues 10 to 11 and histidine 18 each bind ATP; that span reads SF. 3 residues coordinate substrate: lysine 42, leucine 74, and arginine 88. Residues 89 to 91, glutamate 99, and 124 to 130 each bind ATP; these read GLR and YSFLSSS.

Belongs to the bacterial CoaD family. As to quaternary structure, homohexamer. The cofactor is Mg(2+).

Its subcellular location is the cytoplasm. It carries out the reaction (R)-4'-phosphopantetheine + ATP + H(+) = 3'-dephospho-CoA + diphosphate. It functions in the pathway cofactor biosynthesis; coenzyme A biosynthesis; CoA from (R)-pantothenate: step 4/5. Reversibly transfers an adenylyl group from ATP to 4'-phosphopantetheine, yielding dephospho-CoA (dPCoA) and pyrophosphate. This chain is Phosphopantetheine adenylyltransferase, found in Bacillus licheniformis (strain ATCC 14580 / DSM 13 / JCM 2505 / CCUG 7422 / NBRC 12200 / NCIMB 9375 / NCTC 10341 / NRRL NRS-1264 / Gibson 46).